The primary structure comprises 258 residues: Putative cysteine-rich repeat secretory protein 16 (258 aa).

An N-terminal signal peptide occupies residues 1 to 30; sequence MYYSSPTCFVLITIFAVVVTQLIFMRTVSS. Gnk2-homologous domains lie at 37-139 and 144-247; these read YLNH…PFDT and DKDN…LYPF.

It belongs to the cysteine-rich repeat secretory protein family.

It localises to the secreted. In Arabidopsis thaliana (Mouse-ear cress), this protein is Putative cysteine-rich repeat secretory protein 16 (CRRSP16).